The primary structure comprises 644 residues: Pesticidal crystal protein Cry3Aa (644 aa).

The span at 1-13 (MNPNNRSEHDTIK) shows a compositional bias: basic and acidic residues. The disordered stretch occupies residues 1–20 (MNPNNRSEHDTIKTTENNEV). The propeptide at 1 to 57 (MNPNNRSEHDTIKTTENNEVPTNHVQYPLAETPNPTLEDLNYKEFLRMTADNNTEAL) is removed in mature form.

Belongs to the delta endotoxin family.

Its function is as follows. Promotes colloidosmotic lysis by binding to the midgut epithelial cells of Coleoptera. The protein is Pesticidal crystal protein Cry3Aa (cry3Aa) of Bacillus thuringiensis subsp. san diego.